Reading from the N-terminus, the 81-residue chain is Photosystem I iron-sulfur center (81 aa).

4Fe-4S ferredoxin-type domains follow at residues 2-31 (SHAVKIYDTCIGCTQCVRACPLDVLEMVPW) and 39-68 (IASSPRTEDCVGCKRCETACPTDFLSIRVY). 8 residues coordinate [4Fe-4S] cluster: C11, C14, C17, C21, C48, C51, C54, and C58.

The cyanobacterial PSI reaction center is composed of one copy each of PsaA,B,C,D,E,F,I,J,K,L,M and X, and forms trimeric complexes. The cofactor is [4Fe-4S] cluster.

Its subcellular location is the cellular thylakoid membrane. The enzyme catalyses reduced [plastocyanin] + hnu + oxidized [2Fe-2S]-[ferredoxin] = oxidized [plastocyanin] + reduced [2Fe-2S]-[ferredoxin]. Apoprotein for the two 4Fe-4S centers FA and FB of photosystem I (PSI); essential for photochemical activity. FB is the terminal electron acceptor of PSI, donating electrons to ferredoxin. The C-terminus interacts with PsaA/B/D and helps assemble the protein into the PSI complex. Required for binding of PsaD and PsaE to PSI. PSI is a plastocyanin/cytochrome c6-ferredoxin oxidoreductase, converting photonic excitation into a charge separation, which transfers an electron from the donor P700 chlorophyll pair to the spectroscopically characterized acceptors A0, A1, FX, FA and FB in turn. The polypeptide is Photosystem I iron-sulfur center (Prochlorococcus marinus (strain MIT 9211)).